Reading from the N-terminus, the 526-residue chain is piRNA biogenesis factor prde-1 (526 aa).

Positions 436–526 (EAKEEPIDKK…RRRGCEIRRK (91 aa)) are disordered. The span at 439 to 448 (EEPIDKKKDP) shows a compositional bias: basic and acidic residues. Positions 458-467 (GKKRRGRKPK) are enriched in basic residues. The span at 468–487 (KKDDPKMELKDEVKDLKDFV) shows a compositional bias: basic and acidic residues. Low complexity predominate over residues 489–498 (EESTSASSSA).

In terms of tissue distribution, expressed in male and female germ cells.

The protein localises to the nucleus. It localises to the chromosome. Functionally, nuclear factor required for the production of piwi-interacting RNA (piRNA) precursors. Specifically required for piRNAs produced from loci associated with the Ruby motif. Promotes binding of the transcription factor snpc-4 at piRNA genomic clusters. Required for normal fertility. This chain is piRNA biogenesis factor prde-1, found in Caenorhabditis elegans.